An 859-amino-acid polypeptide reads, in one-letter code: Protein SEY1 (859 aa).

At 1–742 (MMMNSHFAGV…KRSAIGGITQ (742 aa)) the chain is on the cytoplasmic side. One can recognise a GB1/RHD3-type G domain in the interval 49–291 (GFNYHLISVF…FQPQYHRRIP (243 aa)). 59–66 (GSQSTGKS) provides a ligand contact to GTP. The stretch at 476 to 496 (FEHELKVYRKDLDDVSGRLRK) forms a coiled coil. A disordered region spans residues 525-544 (LGTGRGGSGAPEHGERPPSE). A helical transmembrane segment spans residues 743–763 (VPLYFYGLLVALGWNEIVAVL). Topologically, residues 764 to 766 (RNP) are lumenal. The chain crosses the membrane as a helical span at residues 767 to 787 (VYFIFLILCAVGAYVTYTLNL). Topologically, residues 788–859 (WGPMIRMGNA…DAEVEDLDDI (72 aa)) are cytoplasmic. The disordered stretch occupies residues 816–859 (SSESGRQAMAMSGNQPRGESVRMNRLNGNGKKDEDAEVEDLDDI). Over residues 850-859 (DAEVEDLDDI) the composition is skewed to acidic residues.

This sequence belongs to the TRAFAC class dynamin-like GTPase superfamily. GB1/RHD3 GTPase family. RHD3 subfamily.

It localises to the endoplasmic reticulum membrane. In terms of biological role, cooperates with the reticulon proteins and tubule-shaping DP1 family proteins to generate and maintain the structure of the tubular endoplasmic reticulum network. Has GTPase activity, which is required for its function in ER organization. The protein is Protein SEY1 of Phaeosphaeria nodorum (strain SN15 / ATCC MYA-4574 / FGSC 10173) (Glume blotch fungus).